Consider the following 345-residue polypeptide: Phosphoribosylformylglycinamidine cyclo-ligase (345 aa).

The protein belongs to the AIR synthase family.

It localises to the cytoplasm. It carries out the reaction 2-formamido-N(1)-(5-O-phospho-beta-D-ribosyl)acetamidine + ATP = 5-amino-1-(5-phospho-beta-D-ribosyl)imidazole + ADP + phosphate + H(+). The protein operates within purine metabolism; IMP biosynthesis via de novo pathway; 5-amino-1-(5-phospho-D-ribosyl)imidazole from N(2)-formyl-N(1)-(5-phospho-D-ribosyl)glycinamide: step 2/2. The sequence is that of Phosphoribosylformylglycinamidine cyclo-ligase from Shewanella frigidimarina (strain NCIMB 400).